Reading from the N-terminus, the 795-residue chain is Outer membrane protein assembly factor BamA (795 aa).

Positions 1 to 19 are cleaved as a signal peptide; it reads MKKLLIASLLFGTTTTVFA. POTRA domains follow at residues 22–89, 90–170, 173–259, 262–341, and 344–418; these read FVAK…VVAK, SIIS…INED, AKLA…VNEG, YDLR…VDAG, and LTVR…VKER.

Belongs to the BamA family. As to quaternary structure, part of the Bam complex.

It is found in the cell outer membrane. In terms of biological role, part of the outer membrane protein assembly complex, which is involved in assembly and insertion of beta-barrel proteins into the outer membrane. In Haemophilus influenzae (strain ATCC 51907 / DSM 11121 / KW20 / Rd), this protein is Outer membrane protein assembly factor BamA.